A 644-amino-acid chain; its full sequence is Interleukin-23 receptor (644 aa).

Residues 1–23 (MSHLTLQLHVVIALYVLFRWCHG) form the signal peptide. Topologically, residues 24-374 (GITSINCSGD…PASGNHQDIG (351 aa)) are extracellular. Residues Asn-47, Asn-130, and Asn-232 are each glycosylated (N-linked (GlcNAc...) asparagine). Fibronectin type-III domains are found at residues 127–217 (APSN…LDDI) and 219–318 (IPSA…TSQE). Residues 375 to 395 (LLSGMVFLAIMLPIFSLIGIF) form a helical membrane-spanning segment. The Cytoplasmic portion of the chain corresponds to 396-644 (NRSLRIGIKR…HFSRISLFQK (249 aa)).

The protein belongs to the type I cytokine receptor family. Type 2 subfamily. In terms of assembly, heterodimer with IL12RB1. In presence of IL23, the heterodimer forms the IL23 receptor. Interacts with JAK2 and in presence of IL23 with STAT3. Post-translationally, phosphorylated in response to IL23. As to expression, expressed by Th1, Th2 and dendritic cells.

Its subcellular location is the cell membrane. In terms of biological role, associates with IL12RB1 to form the interleukin-23 receptor. Binds IL23 and mediates T-cells, NK cells and possibly certain macrophage/myeloid cells stimulation probably through activation of the Jak-Stat signaling cascade. IL23 functions in innate and adaptive immunity and may participate in acute response to infection in peripheral tissues. IL23 may be responsible for autoimmune inflammatory diseases and be important for tumorigenesis. This chain is Interleukin-23 receptor (Il23r), found in Mus musculus (Mouse).